Here is a 341-residue protein sequence, read N- to C-terminus: Platelet-activating factor receptor (341 aa).

The Extracellular portion of the chain corresponds to 1–16 (MEQNGSFRVDSEFRYT). Asn-4 carries N-linked (GlcNAc...) asparagine glycosylation. The chain crosses the membrane as a helical span at residues 17–38 (LFPIVYSVIFVLGVVANGYVLW). At 39–54 (VFATLYPSKKLNEIKI) the chain is on the cytoplasmic side. A helical membrane pass occupies residues 55–74 (FMVNLTVADLLFLMTLPLWI). Topologically, residues 75–91 (VYYSNEGDWIVHKFLCN) are extracellular. The cysteines at positions 90 and 173 are disulfide-linked. Residues 92-113 (LAGCLFFINTYCSVAFLGVITY) form a helical membrane-spanning segment. Over 114–133 (NRYQAVAYPIKTAQATTRKR) the chain is Cytoplasmic. Residues 134–155 (GITLSLVIWISIAATASYFLAT) form a helical membrane-spanning segment. Topologically, residues 156 to 184 (DSTNVVPKKDGSGNITRCFEHYEPYSVPI) are extracellular. Residue Asn-169 is glycosylated (N-linked (GlcNAc...) asparagine). A helical membrane pass occupies residues 185 to 205 (LVVHIFITSCFFLVFFLIFYC). Topologically, residues 206 to 233 (NMVIIHTLLTRPVRQQRKPEVKRRALWM) are cytoplasmic. A helical transmembrane segment spans residues 234-254 (VCTVLAVFVICFVPHHVVQLP). At 255–275 (WTLAELGYQTNFHQAINDAHQ) the chain is on the extracellular side. A helical membrane pass occupies residues 276-295 (ITLCLLSTNCVLDPVIYCFL). Topologically, residues 296-341 (TKKFRKHLSEKFYSMRSSRKCSRATSDTCTEVMMPANQTPVLPLKN) are cytoplasmic.

Belongs to the G-protein coupled receptor 1 family. Interacts with ARRB1. As to expression, present in almost all organs including spleen, small intestine, kidney, lung, liver and brain.

It is found in the cell membrane. Receptor for platelet activating factor, a chemotactic phospholipid mediator that possesses potent inflammatory, smooth-muscle contractile and hypotensive activity. Seems to mediate its action via a G protein that activates a phosphatidylinositol-calcium second messenger system. This is Platelet-activating factor receptor (Ptafr) from Rattus norvegicus (Rat).